The chain runs to 381 residues: MIKKIIFTVTPIFSIPPRGAAAVETWIYQVAKRLSIPNAIACIKNAGYPEYNKINDNCDIHYIGFSKVYKRLFQKWTRLDPLPYSQRILNIRDKVTTQEDSVIVIHNSMKLYRQIRERNPNAKLVMHMHNAFEPELPDNDAKIIVPSQFLKAFYEERLPAAAVSIVPNGFCAETYKRNPQDNLRQQLNIAEDATVLLYAGRISPDKGILLLLQAFKQLRTLRSNIKLVVVGDPYASRKGEKAEYQKKVLDAAKEIGTDCIMAGGQSPDQMHNFYHIADLVIVPSQVEEAFCMVAVEAMAAGKAVLASKKGGISEFVLDGITGYHLAEPMSSDSIINDINRALADKERHQIAEKAKSLVFSKYSWENVAQRFEEQMKNWFDK.

The protein belongs to the glycosyltransferase group 1 family. Glycosyltransferase 4 subfamily.

It localises to the cell inner membrane. The enzyme catalyses UDP-N-acetyl-alpha-D-glucosamine + [lipopolysaccharide] = UDP + N-acetyl-alpha-D-glucosaminyl-[lipopolysaccharide].. Its pathway is bacterial outer membrane biogenesis; LPS core biosynthesis. Its function is as follows. Transferase involved in the biosynthesis of the core oligosaccharide region of lipopolysaccharide (LPS). Catalyzes the addition of the terminal N-acetyl-D-glucosamine (GlcNAc) group to the outer-core glucose II, the last step of the lipid A-core oligosaccharide biosynthesis. In Salmonella typhimurium (strain LT2 / SGSC1412 / ATCC 700720), this protein is Lipopolysaccharide 1,2-N-acetylglucosaminetransferase.